We begin with the raw amino-acid sequence, 365 residues long: Cobalt-precorrin-5B C(1)-methyltransferase (365 aa).

This sequence belongs to the CbiD family.

The catalysed reaction is Co-precorrin-5B + S-adenosyl-L-methionine = Co-precorrin-6A + S-adenosyl-L-homocysteine. Its pathway is cofactor biosynthesis; adenosylcobalamin biosynthesis; cob(II)yrinate a,c-diamide from sirohydrochlorin (anaerobic route): step 6/10. Catalyzes the methylation of C-1 in cobalt-precorrin-5B to form cobalt-precorrin-6A. This chain is Cobalt-precorrin-5B C(1)-methyltransferase, found in Geobacillus sp. (strain WCH70).